We begin with the raw amino-acid sequence, 459 residues long: Bifunctional protein GlmU (459 aa).

The pyrophosphorylase stretch occupies residues 1 to 229; the sequence is MSNFAIXLAA…FDESLGVNDR (229 aa). Residues 8 to 11, K22, Q72, and 77 to 78 each bind UDP-N-acetyl-alpha-D-glucosamine; these read LAAG and GT. Residue D102 participates in Mg(2+) binding. Residues G139, E154, N169, and N227 each contribute to the UDP-N-acetyl-alpha-D-glucosamine site. N227 lines the Mg(2+) pocket. Positions 230–250 are linker; the sequence is VALATAESVMRRRINHKHMVN. The tract at residues 251–459 is N-acetyltransferase; sequence GVSFVNPEAT…TRLPHHPKNQ (209 aa). Residues R332 and K350 each contribute to the UDP-N-acetyl-alpha-D-glucosamine site. H362 functions as the Proton acceptor in the catalytic mechanism. The UDP-N-acetyl-alpha-D-glucosamine site is built by Y365 and N376. Residues A379, 385–386, S404, A422, and R439 each bind acetyl-CoA; that span reads NY.

In the N-terminal section; belongs to the N-acetylglucosamine-1-phosphate uridyltransferase family. It in the C-terminal section; belongs to the transferase hexapeptide repeat family. In terms of assembly, homotrimer. It depends on Mg(2+) as a cofactor.

Its subcellular location is the cytoplasm. The catalysed reaction is alpha-D-glucosamine 1-phosphate + acetyl-CoA = N-acetyl-alpha-D-glucosamine 1-phosphate + CoA + H(+). It catalyses the reaction N-acetyl-alpha-D-glucosamine 1-phosphate + UTP + H(+) = UDP-N-acetyl-alpha-D-glucosamine + diphosphate. It functions in the pathway nucleotide-sugar biosynthesis; UDP-N-acetyl-alpha-D-glucosamine biosynthesis; N-acetyl-alpha-D-glucosamine 1-phosphate from alpha-D-glucosamine 6-phosphate (route II): step 2/2. It participates in nucleotide-sugar biosynthesis; UDP-N-acetyl-alpha-D-glucosamine biosynthesis; UDP-N-acetyl-alpha-D-glucosamine from N-acetyl-alpha-D-glucosamine 1-phosphate: step 1/1. The protein operates within bacterial outer membrane biogenesis; LPS lipid A biosynthesis. Catalyzes the last two sequential reactions in the de novo biosynthetic pathway for UDP-N-acetylglucosamine (UDP-GlcNAc). The C-terminal domain catalyzes the transfer of acetyl group from acetyl coenzyme A to glucosamine-1-phosphate (GlcN-1-P) to produce N-acetylglucosamine-1-phosphate (GlcNAc-1-P), which is converted into UDP-GlcNAc by the transfer of uridine 5-monophosphate (from uridine 5-triphosphate), a reaction catalyzed by the N-terminal domain. The polypeptide is Bifunctional protein GlmU (Streptococcus pneumoniae serotype 19F (strain G54)).